The chain runs to 150 residues: 3-dehydroquinate dehydratase (150 aa).

The active-site Proton acceptor is Tyr-26. Residues Asn-77, His-83, and Asp-90 each coordinate substrate. His-103 acts as the Proton donor in catalysis. Residues 104–105 (LS) and Arg-114 contribute to the substrate site.

The protein belongs to the type-II 3-dehydroquinase family. As to quaternary structure, homododecamer.

It catalyses the reaction 3-dehydroquinate = 3-dehydroshikimate + H2O. The protein operates within metabolic intermediate biosynthesis; chorismate biosynthesis; chorismate from D-erythrose 4-phosphate and phosphoenolpyruvate: step 3/7. Its function is as follows. Catalyzes a trans-dehydration via an enolate intermediate. The chain is 3-dehydroquinate dehydratase from Yersinia enterocolitica serotype O:8 / biotype 1B (strain NCTC 13174 / 8081).